Consider the following 193-residue polypeptide: MVTTNEPNIYETGVLDSNAEGNFVYTTLDAAINWIRKNSLWPMPMGLSCCAIEFMAVACSRYDLSRFGSEVTRFSPRQADVMIVAGTVTYKMALAVRRIWDQMPEPKWCIAMGACASTGGMFRSYSVLQGVDKILPVDVYISGCPPRPEAILEALLTLRKKLDTQQPARTFFKKEEPREANAPVPVNTEMPLE.

Residues cysteine 49, cysteine 50, cysteine 115, and cysteine 144 each coordinate [4Fe-4S] cluster. The interval 172–193 is disordered; sequence FKKEEPREANAPVPVNTEMPLE.

This sequence belongs to the complex I 20 kDa subunit family. In terms of assembly, NDH-1 is composed of 14 different subunits. Subunits NuoB, C, D, E, F, and G constitute the peripheral sector of the complex. The cofactor is [4Fe-4S] cluster.

It localises to the cell inner membrane. The catalysed reaction is a quinone + NADH + 5 H(+)(in) = a quinol + NAD(+) + 4 H(+)(out). Functionally, NDH-1 shuttles electrons from NADH, via FMN and iron-sulfur (Fe-S) centers, to quinones in the respiratory chain. The immediate electron acceptor for the enzyme in this species is believed to be ubiquinone. Couples the redox reaction to proton translocation (for every two electrons transferred, four hydrogen ions are translocated across the cytoplasmic membrane), and thus conserves the redox energy in a proton gradient. This is NADH-quinone oxidoreductase subunit B from Akkermansia muciniphila (strain ATCC BAA-835 / DSM 22959 / JCM 33894 / BCRC 81048 / CCUG 64013 / CIP 107961 / Muc).